A 178-amino-acid chain; its full sequence is MSGAGAAGSVRGLRVDGLPPLPKSLSGLLHSASGGGASGGWRHLERLYAQKSRIQDELSRGSAGGGGARAAALPAKPPNLDAALALLRKEMVGLRQLDMSLLCQLYSLYESIQEYKGACQAAASPDSTYALENGFFDEEDEYFQEQNSLQDGKERGPPRDLMLPVSPLPSGDWILESI.

It belongs to the FAM89 family.

The sequence is that of Protein FAM89A (FAM89A) from Bos taurus (Bovine).